A 452-amino-acid chain; its full sequence is Phosphoglucosamine mutase (452 aa).

The active-site Phosphoserine intermediate is the Ser112. Mg(2+)-binding residues include Ser112, Asp251, Asp253, and Asp255. Ser112 carries the post-translational modification Phosphoserine.

It belongs to the phosphohexose mutase family. It depends on Mg(2+) as a cofactor. Activated by phosphorylation.

The catalysed reaction is alpha-D-glucosamine 1-phosphate = D-glucosamine 6-phosphate. In terms of biological role, catalyzes the conversion of glucosamine-6-phosphate to glucosamine-1-phosphate. In Bordetella bronchiseptica (strain ATCC BAA-588 / NCTC 13252 / RB50) (Alcaligenes bronchisepticus), this protein is Phosphoglucosamine mutase.